Reading from the N-terminus, the 69-residue chain is UPF0337 protein YjbJ (69 aa).

This sequence belongs to the UPF0337 (CsbD) family.

This is UPF0337 protein YjbJ (yjbJ) from Escherichia coli O6:H1 (strain CFT073 / ATCC 700928 / UPEC).